A 224-amino-acid polypeptide reads, in one-letter code: MTINHFALNAVDRSAEVQGKGASRRLRKQNLVPAIIYGGGEQPIAISIKINELVKSLEFEAFFSHILTLNVDGEEHQVVIKDLQRHPAKGFPMHADFQRVVKGQKINMNVPVHFSGREEAPGTKAGGILSTLVTDIEIVCIPSQLPEYLEIDVSGMEIGDLFRLSDIKLPEGVIIFDLDMEDAHDRTIVNMQPPTVQEVDKVAEIDASDVPATEQGTDGNKDGK.

Belongs to the bacterial ribosomal protein bL25 family. CTC subfamily. Part of the 50S ribosomal subunit; part of the 5S rRNA/L5/L18/L25 subcomplex. Contacts the 5S rRNA. Binds to the 5S rRNA independently of L5 and L18.

Functionally, this is one of the proteins that binds to the 5S RNA in the ribosome where it forms part of the central protuberance. This Psychrobacter arcticus (strain DSM 17307 / VKM B-2377 / 273-4) protein is Large ribosomal subunit protein bL25.